The following is a 420-amino-acid chain: UDP-N-acetylglucosamine 1-carboxyvinyltransferase (420 aa).

22–23 (KN) is a phosphoenolpyruvate binding site. Arginine 92 contacts UDP-N-acetyl-alpha-D-glucosamine. Cysteine 116 serves as the catalytic Proton donor. 2-(S-cysteinyl)pyruvic acid O-phosphothioketal is present on cysteine 116. Residues 121 to 125 (RPVDQ), aspartate 304, and isoleucine 326 each bind UDP-N-acetyl-alpha-D-glucosamine.

Belongs to the EPSP synthase family. MurA subfamily.

It is found in the cytoplasm. It catalyses the reaction phosphoenolpyruvate + UDP-N-acetyl-alpha-D-glucosamine = UDP-N-acetyl-3-O-(1-carboxyvinyl)-alpha-D-glucosamine + phosphate. Its pathway is cell wall biogenesis; peptidoglycan biosynthesis. In terms of biological role, cell wall formation. Adds enolpyruvyl to UDP-N-acetylglucosamine. The sequence is that of UDP-N-acetylglucosamine 1-carboxyvinyltransferase from Paraburkholderia phymatum (strain DSM 17167 / CIP 108236 / LMG 21445 / STM815) (Burkholderia phymatum).